Here is a 278-residue protein sequence, read N- to C-terminus: Protein lyl-1 (278 aa).

Positions 1–46 (MCPPQARAEVGSAMTEKTEMVCASSPAPAPPSKPASPGPLSTEEVD) are disordered. Pro residues predominate over residues 27–37 (APAPPSKPASP). Residues 149–201 (ARRVFTNSRERWRQQHVNGAFAELRKLLPTHPPDRKLSKNEVLRLAMKYIGFL) enclose the bHLH domain. Residues 212–278 (LTSGPSAPGS…EQTSLSPEVR (67 aa)) form a disordered region. A compositionally biased stretch (polar residues) spans 269–278 (EQTSLSPEVR). Position 274 is a phosphoserine (S274).

In terms of assembly, efficient DNA binding requires dimerization with another bHLH protein.

It localises to the nucleus. The protein is Protein lyl-1 (Lyl1) of Mus musculus (Mouse).